The sequence spans 367 residues: Heat-inducible transcription repressor HrcA (367 aa).

The protein belongs to the HrcA family.

Negative regulator of class I heat shock genes (grpE-dnaK-dnaJ and groELS operons). Prevents heat-shock induction of these operons. This Acaryochloris marina (strain MBIC 11017) protein is Heat-inducible transcription repressor HrcA.